A 372-amino-acid chain; its full sequence is Alginate lyase (372 aa).

Positions 1–22 (MKTRLALPCLLGSLLLSSAVHA) are cleaved as a signal peptide. Substrate is bound by residues 61 to 62 (SK), 134 to 135 (HT), and Tyr252.

The protein belongs to the polysaccharide lyase 5 family.

Its subcellular location is the periplasm. The catalysed reaction is Eliminative cleavage of alginate to give oligosaccharides with 4-deoxy-alpha-L-erythro-hex-4-enuronosyl groups at their non-reducing ends and beta-D-mannuronate at their reducing end.. Its activity is regulated as follows. Monovalent cations such as potassium and sodium enhance activity, as well as a combined action of these cations with magnesium. However, other cations like calcium, cobalt, manganese and zinc, or the presence of EDTA, do not affect the enzymatic activity. Its function is as follows. Catalyzes the depolymerization of alginate by cleaving the beta-1,4 glycosidic bond between two adjacent sugar residues via a beta-elimination mechanism. Degrades deacetylated polymannuronate alginate more efficiently than non-deacetylated polyM. Is able to degrade its own alginate, but at a lower efficiency than that produced from M.pyriferia and P.aeruginosa. May serve to degrade mislocalized alginate that is trapped in the periplasmic space. This chain is Alginate lyase, found in Azotobacter chroococcum mcd 1.